The chain runs to 203 residues: Peptidyl-tRNA hydrolase (203 aa).

Tyrosine 18 serves as a coordination point for tRNA. The active-site Proton acceptor is the histidine 23. TRNA is bound by residues tyrosine 69, asparagine 71, and asparagine 117.

It belongs to the PTH family. In terms of assembly, monomer.

The protein resides in the cytoplasm. The catalysed reaction is an N-acyl-L-alpha-aminoacyl-tRNA + H2O = an N-acyl-L-amino acid + a tRNA + H(+). Hydrolyzes ribosome-free peptidyl-tRNAs (with 1 or more amino acids incorporated), which drop off the ribosome during protein synthesis, or as a result of ribosome stalling. In terms of biological role, catalyzes the release of premature peptidyl moieties from peptidyl-tRNA molecules trapped in stalled 50S ribosomal subunits, and thus maintains levels of free tRNAs and 50S ribosomes. The chain is Peptidyl-tRNA hydrolase from Parasynechococcus marenigrum (strain WH8102).